The chain runs to 173 residues: MNQHPNKPIFKVGIGYDVHKFDNTCYNDANTFITICGIKINYHKKIIAHSDGDVGLHALTDAILGAVGCGSIGQHFPNTDNTWKNIKSDYFLIEAQKKAQEKGYSISNADITIICEQPKIMPHALEMQEYIANLICIDPSCINVKATTTEKLGFLGRKEGIAAQAIVLCCLQN.

Positions 17 and 19 each coordinate a divalent metal cation. 4-CDP-2-C-methyl-D-erythritol 2-phosphate is bound by residues 17–19 (DVH) and 49–50 (HS). An a divalent metal cation-binding site is contributed by histidine 57. 4-CDP-2-C-methyl-D-erythritol 2-phosphate is bound by residues 76 to 80 (FPNTD), 147 to 150 (TTTE), phenylalanine 154, and arginine 157.

This sequence belongs to the IspF family. Homotrimer. A divalent metal cation serves as cofactor.

It carries out the reaction 4-CDP-2-C-methyl-D-erythritol 2-phosphate = 2-C-methyl-D-erythritol 2,4-cyclic diphosphate + CMP. The protein operates within isoprenoid biosynthesis; isopentenyl diphosphate biosynthesis via DXP pathway; isopentenyl diphosphate from 1-deoxy-D-xylulose 5-phosphate: step 4/6. In terms of biological role, involved in the biosynthesis of isopentenyl diphosphate (IPP) and dimethylallyl diphosphate (DMAPP), two major building blocks of isoprenoid compounds. Catalyzes the conversion of 4-diphosphocytidyl-2-C-methyl-D-erythritol 2-phosphate (CDP-ME2P) to 2-C-methyl-D-erythritol 2,4-cyclodiphosphate (ME-CPP) with a corresponding release of cytidine 5-monophosphate (CMP). The polypeptide is 2-C-methyl-D-erythritol 2,4-cyclodiphosphate synthase (Ehrlichia chaffeensis (strain ATCC CRL-10679 / Arkansas)).